Here is a 152-residue protein sequence, read N- to C-terminus: Ubiquitin-conjugating enzyme E2 W (152 aa).

M1 is covalently cross-linked (Peptide (Met-Gly) (interchain with G-Cter in ubiquitin)). Positions 4–152 (AATRRLMKEL…TRWWFHDDSV (149 aa)) constitute a UBC core domain. Catalysis depends on C92, which acts as the Glycyl thioester intermediate.

Belongs to the ubiquitin-conjugating enzyme family.

The enzyme catalyses S-ubiquitinyl-[E1 ubiquitin-activating enzyme]-L-cysteine + [E2 ubiquitin-conjugating enzyme]-L-cysteine = [E1 ubiquitin-activating enzyme]-L-cysteine + S-ubiquitinyl-[E2 ubiquitin-conjugating enzyme]-L-cysteine.. It carries out the reaction S-ubiquitinyl-[E1 ubiquitin-activating enzyme]-L-cysteine + [acceptor protein]-N-terminal-amino acid = [E1 ubiquitin-activating enzyme]-L-cysteine + N-terminal-ubiquitinyl-[acceptor protein].. It functions in the pathway protein modification; protein ubiquitination. Accepts ubiquitin from the E1 complex and catalyzes its covalent attachment to other proteins. Together with ubc-18, required for the ubiquitination of membranous organelles, and the removal of paternal mitochondria from early embryos. The polypeptide is Ubiquitin-conjugating enzyme E2 W (Caenorhabditis elegans).